Consider the following 325-residue polypeptide: Holliday junction branch migration complex subunit RuvB (325 aa).

The interval methionine 1 to tyrosine 181 is large ATPase domain (RuvB-L). ATP-binding positions include isoleucine 20, arginine 21, glycine 62, lysine 65, threonine 66, threonine 67, glutamate 128–phenylalanine 130, arginine 171, tyrosine 181, and arginine 218. Threonine 66 contacts Mg(2+). The interval asparagine 182–alanine 252 is small ATPAse domain (RuvB-S). Residues arginine 255–leucine 325 are head domain (RuvB-H). The DNA site is built by arginine 291, arginine 310, and arginine 315.

The protein belongs to the RuvB family. As to quaternary structure, homohexamer. Forms an RuvA(8)-RuvB(12)-Holliday junction (HJ) complex. HJ DNA is sandwiched between 2 RuvA tetramers; dsDNA enters through RuvA and exits via RuvB. An RuvB hexamer assembles on each DNA strand where it exits the tetramer. Each RuvB hexamer is contacted by two RuvA subunits (via domain III) on 2 adjacent RuvB subunits; this complex drives branch migration. In the full resolvosome a probable DNA-RuvA(4)-RuvB(12)-RuvC(2) complex forms which resolves the HJ.

It localises to the cytoplasm. The catalysed reaction is ATP + H2O = ADP + phosphate + H(+). In terms of biological role, the RuvA-RuvB-RuvC complex processes Holliday junction (HJ) DNA during genetic recombination and DNA repair, while the RuvA-RuvB complex plays an important role in the rescue of blocked DNA replication forks via replication fork reversal (RFR). RuvA specifically binds to HJ cruciform DNA, conferring on it an open structure. The RuvB hexamer acts as an ATP-dependent pump, pulling dsDNA into and through the RuvAB complex. RuvB forms 2 homohexamers on either side of HJ DNA bound by 1 or 2 RuvA tetramers; 4 subunits per hexamer contact DNA at a time. Coordinated motions by a converter formed by DNA-disengaged RuvB subunits stimulates ATP hydrolysis and nucleotide exchange. Immobilization of the converter enables RuvB to convert the ATP-contained energy into a lever motion, pulling 2 nucleotides of DNA out of the RuvA tetramer per ATP hydrolyzed, thus driving DNA branch migration. The RuvB motors rotate together with the DNA substrate, which together with the progressing nucleotide cycle form the mechanistic basis for DNA recombination by continuous HJ branch migration. Branch migration allows RuvC to scan DNA until it finds its consensus sequence, where it cleaves and resolves cruciform DNA. This is Holliday junction branch migration complex subunit RuvB from Psychrobacter sp. (strain PRwf-1).